The chain runs to 416 residues: Adenylosuccinate synthetase (416 aa).

GTP contacts are provided by residues 13–19 (GDEGKGK) and 41–43 (GHT). Asp14 serves as the catalytic Proton acceptor. The Mg(2+) site is built by Asp14 and Gly41. IMP contacts are provided by residues 14-17 (DEGK), 39-42 (NAGH), Thr126, Arg140, Gln220, Thr235, and Arg299. His42 functions as the Proton donor in the catalytic mechanism. 295–301 (TTTGRKR) is a substrate binding site. GTP-binding positions include Arg301, 327–329 (KLD), and 405–407 (STS).

Belongs to the adenylosuccinate synthetase family. Homodimer. Requires Mg(2+) as cofactor.

Its subcellular location is the cytoplasm. It carries out the reaction IMP + L-aspartate + GTP = N(6)-(1,2-dicarboxyethyl)-AMP + GDP + phosphate + 2 H(+). Its pathway is purine metabolism; AMP biosynthesis via de novo pathway; AMP from IMP: step 1/2. In terms of biological role, plays an important role in the de novo pathway of purine nucleotide biosynthesis. Catalyzes the first committed step in the biosynthesis of AMP from IMP. This is Adenylosuccinate synthetase from Campylobacter hominis (strain ATCC BAA-381 / DSM 21671 / CCUG 45161 / LMG 19568 / NCTC 13146 / CH001A).